The primary structure comprises 443 residues: Protein king tubby (443 aa).

2 disordered regions span residues 57-80 (TNGS…NNMR) and 98-191 (HELE…EGDV). The segment covering 68–80 (AMNTSRNHSNNMR) has biased composition (polar residues). Over residues 113–128 (QHQQSASHSANSTQSQ) the composition is skewed to low complexity. Residue serine 136 is modified to Phosphoserine. Positions 177 to 186 (NGTGNGTGGE) are enriched in gly residues.

This sequence belongs to the TUB family.

Its subcellular location is the cytoplasm. The protein localises to the nucleus. It localises to the cell projection. It is found in the cilium membrane. The protein resides in the rhabdomere. This chain is Protein king tubby, found in Drosophila simulans (Fruit fly).